A 122-amino-acid polypeptide reads, in one-letter code: FMN-binding protein (122 aa).

Monomer and homodimer. Requires FMN as cofactor.

It localises to the cytoplasm. In terms of biological role, functions as a redox protein with a potential of -325 mV. This Nitratidesulfovibrio vulgaris (strain DSM 19637 / Miyazaki F) (Desulfovibrio vulgaris) protein is FMN-binding protein.